The sequence spans 957 residues: Glycine dehydrogenase (decarboxylating) (957 aa).

Lysine 708 bears the N6-(pyridoxal phosphate)lysine mark.

It belongs to the GcvP family. In terms of assembly, the glycine cleavage system is composed of four proteins: P, T, L and H. Pyridoxal 5'-phosphate is required as a cofactor.

It carries out the reaction N(6)-[(R)-lipoyl]-L-lysyl-[glycine-cleavage complex H protein] + glycine + H(+) = N(6)-[(R)-S(8)-aminomethyldihydrolipoyl]-L-lysyl-[glycine-cleavage complex H protein] + CO2. In terms of biological role, the glycine cleavage system catalyzes the degradation of glycine. The P protein binds the alpha-amino group of glycine through its pyridoxal phosphate cofactor; CO(2) is released and the remaining methylamine moiety is then transferred to the lipoamide cofactor of the H protein. In Escherichia coli O6:H1 (strain CFT073 / ATCC 700928 / UPEC), this protein is Glycine dehydrogenase (decarboxylating).